A 20-amino-acid chain; its full sequence is Catechol 1,2-dioxygenase (20 aa).

Belongs to the intradiol ring-cleavage dioxygenase family. Homodimer which dissociates into active monomeric subunits at high ionic strengths. Fe(3+) is required as a cofactor.

The catalysed reaction is catechol + O2 = cis,cis-muconate + 2 H(+). It participates in aromatic compound metabolism; beta-ketoadipate pathway; 5-oxo-4,5-dihydro-2-furylacetate from catechol: step 1/3. The protein is Catechol 1,2-dioxygenase of Acinetobacter radioresistens.